The following is a 310-amino-acid chain: Solute carrier family 25 member 47 (310 aa).

Solcar repeat units follow at residues 1–80 (MDFV…CLAH), 93–208 (PTKA…LCEW), and 217–304 (PDVL…VLRL). The next 6 helical transmembrane spans lie at 3-23 (FVAG…LDTV), 55-75 (GLSL…GTYH), 98-114 (ITLS…FLTS), 194-210 (SFAT…EWLT), 219-239 (VLGV…VATP), and 280-298 (LALN…FVAY).

The protein belongs to the mitochondrial carrier (TC 2.A.29) family. In terms of tissue distribution, specifically expressed in liver (at protein level).

It is found in the mitochondrion inner membrane. It localises to the mitochondrion outer membrane. It catalyses the reaction NAD(+)(in) = NAD(+)(out). The catalysed reaction is acetyl-CoA(in) = acetyl-CoA(out). In terms of biological role, mitochondrial NAD(+) transporter that acts as a 'metabolic gate' in hepatic lipogenesis. Provides NAD(+) substrate to mitochondrial SIRT3 deacetylase and enables its NAD(+)-dependent activities in mitochondrial energy metabolism. This triggers downstream activation of PRKAA1/AMPK-alpha signaling cascade that negatively regulates sterol regulatory element-binding protein (SREBP) transcriptional activities and ATP-consuming lipogenesis to restore cellular energy balance. May transport other mitochondrial metabolites having an aromatic nucleotide and phosphate groups, such as acetyl-CoA. Does not transport amino acids. The transport mechanism remains to be elucidated. In Mus musculus (Mouse), this protein is Solute carrier family 25 member 47.